Reading from the N-terminus, the 169-residue chain is Gamma-crystallin 2 (169 aa).

2 consecutive Beta/gamma crystallin 'Greek key' domains span residues 1–34 (YEDRNFQGRCYECSGDCADLHSYFSRCNSIKVDS) and 35–77 (GCWM…KVIP). The connecting peptide stretch occupies residues 78–82 (QQKGP). 2 Beta/gamma crystallin 'Greek key' domains span residues 83–123 (HKMK…NVLE) and 124–166 (GHWI…RRVL).

This sequence belongs to the beta/gamma-crystallin family. As to quaternary structure, monomer.

Functionally, crystallins are the dominant structural components of the vertebrate eye lens. In Rana temporaria (European common frog), this protein is Gamma-crystallin 2.